The chain runs to 664 residues: UvrABC system protein B (664 aa).

The 158-residue stretch at 23–180 folds into the Helicase ATP-binding domain; the sequence is EGLNRGMRFQ…ERLARIGYQR (158 aa). 36–43 serves as a coordination point for ATP; it reads GVTGSGKT. Residues 89–112 carry the Beta-hairpin motif; sequence YYDYYQPEAYIPTKDLYIEKNADI. The region spanning 429–588 is the Helicase C-terminal domain; it reads DLVNEIVKVK…ITPRSVIKPL (160 aa). The UVR domain maps to 622-657; the sequence is EEYMAVLEEEMYRAASELRYEDAAALRDELFRIREE.

This sequence belongs to the UvrB family. In terms of assembly, forms a heterotetramer with UvrA during the search for lesions. Interacts with UvrC in an incision complex.

It is found in the cytoplasm. Its function is as follows. The UvrABC repair system catalyzes the recognition and processing of DNA lesions. A damage recognition complex composed of 2 UvrA and 2 UvrB subunits scans DNA for abnormalities. Upon binding of the UvrA(2)B(2) complex to a putative damaged site, the DNA wraps around one UvrB monomer. DNA wrap is dependent on ATP binding by UvrB and probably causes local melting of the DNA helix, facilitating insertion of UvrB beta-hairpin between the DNA strands. Then UvrB probes one DNA strand for the presence of a lesion. If a lesion is found the UvrA subunits dissociate and the UvrB-DNA preincision complex is formed. This complex is subsequently bound by UvrC and the second UvrB is released. If no lesion is found, the DNA wraps around the other UvrB subunit that will check the other stand for damage. This Thermotoga petrophila (strain ATCC BAA-488 / DSM 13995 / JCM 10881 / RKU-1) protein is UvrABC system protein B.